The primary structure comprises 191 residues: Holliday junction branch migration complex subunit RuvA (191 aa).

Residues Met1–Pro63 are domain I. Residues Asp64–Leu136 form a domain II region. The segment at Leu136–Lys140 is flexible linker. A domain III region spans residues Val141 to Arg191.

The protein belongs to the RuvA family. In terms of assembly, homotetramer. Forms an RuvA(8)-RuvB(12)-Holliday junction (HJ) complex. HJ DNA is sandwiched between 2 RuvA tetramers; dsDNA enters through RuvA and exits via RuvB. An RuvB hexamer assembles on each DNA strand where it exits the tetramer. Each RuvB hexamer is contacted by two RuvA subunits (via domain III) on 2 adjacent RuvB subunits; this complex drives branch migration. In the full resolvosome a probable DNA-RuvA(4)-RuvB(12)-RuvC(2) complex forms which resolves the HJ.

It localises to the cytoplasm. The RuvA-RuvB-RuvC complex processes Holliday junction (HJ) DNA during genetic recombination and DNA repair, while the RuvA-RuvB complex plays an important role in the rescue of blocked DNA replication forks via replication fork reversal (RFR). RuvA specifically binds to HJ cruciform DNA, conferring on it an open structure. The RuvB hexamer acts as an ATP-dependent pump, pulling dsDNA into and through the RuvAB complex. HJ branch migration allows RuvC to scan DNA until it finds its consensus sequence, where it cleaves and resolves the cruciform DNA. The polypeptide is Holliday junction branch migration complex subunit RuvA (Thermus thermophilus (strain ATCC BAA-163 / DSM 7039 / HB27)).